The chain runs to 186 residues: Elongation factor P (186 aa).

Belongs to the elongation factor P family.

It localises to the cytoplasm. It participates in protein biosynthesis; polypeptide chain elongation. Involved in peptide bond synthesis. Stimulates efficient translation and peptide-bond synthesis on native or reconstituted 70S ribosomes in vitro. Probably functions indirectly by altering the affinity of the ribosome for aminoacyl-tRNA, thus increasing their reactivity as acceptors for peptidyl transferase. The polypeptide is Elongation factor P (Cupriavidus metallidurans (strain ATCC 43123 / DSM 2839 / NBRC 102507 / CH34) (Ralstonia metallidurans)).